The chain runs to 935 residues: C-1-tetrahydrofolate synthase, cytoplasmic (935 aa).

Met1 carries the N-acetylmethionine modification. Positions 2–291 (APAGILNGKL…MLMQSTVESA (290 aa)) are methylenetetrahydrofolate dehydrogenase and methenyltetrahydrofolate cyclohydrolase (D/C) domain. Substrate is bound by residues 52 to 56 (YINVK) and 99 to 101 (VQL). The active site involves Lys56. NADP(+) contacts are provided by residues 172–174 (GRS) and Ser197. 272–276 (PGGVG) contributes to the substrate binding site. Residues 310 to 935 (LNLKTPVPSD…PETEQVNGLF (626 aa)) are formyltetrahydrofolate synthetase domain. Residue Ser318 is modified to Phosphoserine. 380–387 (TPLGEGKS) is an ATP binding site. Residues Ser413 and Ser490 each carry the phosphoserine modification.

This sequence in the N-terminal section; belongs to the tetrahydrofolate dehydrogenase/cyclohydrolase family. The protein in the C-terminal section; belongs to the formate--tetrahydrofolate ligase family. In terms of assembly, homodimer.

The protein resides in the cytoplasm. The enzyme catalyses (6R)-5,10-methylene-5,6,7,8-tetrahydrofolate + NADP(+) = (6R)-5,10-methenyltetrahydrofolate + NADPH. It carries out the reaction (6R)-5,10-methenyltetrahydrofolate + H2O = (6R)-10-formyltetrahydrofolate + H(+). It catalyses the reaction (6S)-5,6,7,8-tetrahydrofolate + formate + ATP = (6R)-10-formyltetrahydrofolate + ADP + phosphate. Its pathway is one-carbon metabolism; tetrahydrofolate interconversion. Functionally, trifunctional enzyme that catalyzes the interconversion of three forms of one-carbon-substituted tetrahydrofolate: (6R)-5,10-methylene-5,6,7,8-tetrahydrofolate, 5,10-methenyltetrahydrofolate and (6S)-10-formyltetrahydrofolate. These derivatives of tetrahydrofolate are differentially required in nucleotide and amino acid biosynthesis, (6S)-10-formyltetrahydrofolate being required for purine biosynthesis while (6R)-5,10-methylene-5,6,7,8-tetrahydrofolate is used for serine and methionine biosynthesis for instance. This chain is C-1-tetrahydrofolate synthase, cytoplasmic (Mthfd1), found in Mus musculus (Mouse).